Here is a 48-residue protein sequence, read N- to C-terminus: Small, acid-soluble spore protein P (48 aa).

A compositionally biased stretch (basic and acidic residues) spans 1-12 (MTNKNDGKDMRK). Positions 1–48 (MTNKNDGKDMRKNAPKGAQPGQPEPLSGSKKVKNRNHTRQKHNSSHDM) are disordered. Basic residues predominate over residues 30 to 48 (KKVKNRNHTRQKHNSSHDM).

Belongs to the SspP family.

It localises to the spore core. The protein is Small, acid-soluble spore protein P of Bacillus licheniformis (strain ATCC 14580 / DSM 13 / JCM 2505 / CCUG 7422 / NBRC 12200 / NCIMB 9375 / NCTC 10341 / NRRL NRS-1264 / Gibson 46).